The chain runs to 704 residues: DNA ligase (704 aa).

NAD(+) is bound by residues 43–47 (DADYD), 92–93 (SL), and Glu124. Lys126 (N6-AMP-lysine intermediate) is an active-site residue. Positions 147, 182, 298, and 322 each coordinate NAD(+). The Zn(2+) site is built by Cys427, Cys430, Cys445, and Cys451. One can recognise a BRCT domain in the interval 625–704 (PVASPVAGKI…DGWLRLIGDA (80 aa)).

The protein belongs to the NAD-dependent DNA ligase family. LigA subfamily. Mg(2+) serves as cofactor. Mn(2+) is required as a cofactor.

It carries out the reaction NAD(+) + (deoxyribonucleotide)n-3'-hydroxyl + 5'-phospho-(deoxyribonucleotide)m = (deoxyribonucleotide)n+m + AMP + beta-nicotinamide D-nucleotide.. Its function is as follows. DNA ligase that catalyzes the formation of phosphodiester linkages between 5'-phosphoryl and 3'-hydroxyl groups in double-stranded DNA using NAD as a coenzyme and as the energy source for the reaction. It is essential for DNA replication and repair of damaged DNA. This chain is DNA ligase, found in Cereibacter sphaeroides (strain ATCC 17023 / DSM 158 / JCM 6121 / CCUG 31486 / LMG 2827 / NBRC 12203 / NCIMB 8253 / ATH 2.4.1.) (Rhodobacter sphaeroides).